The chain runs to 527 residues: Sensory neuron membrane protein 1 (527 aa).

Topologically, residues 1–10 (MQLQKPLKIG) are cytoplasmic. Residues 11–31 (LGMMGAGLFGIIFGWVLFPVI) traverse the membrane as a helical segment. Topologically, residues 32-456 (LKSQLKKEMA…LKNQLFIPKR (425 aa)) are extracellular. N-linked (GlcNAc...) asparagine glycans are attached at residues asparagine 67 and asparagine 229. 3 disulfide bridges follow: cysteine 268-cysteine 333, cysteine 297-cysteine 352, and cysteine 335-cysteine 341. N-linked (GlcNAc...) asparagine glycosylation occurs at asparagine 440. Residues 457–477 (IVSVVKWLLAGVGFVGLVGSL) traverse the membrane as a helical segment. At 478–527 (VYQFKGKMINFALSPSSAPVTKVNPEINQQNQPKDISIIGESQNPPKVDM) the chain is on the cytoplasmic side.

This sequence belongs to the CD36 family. Principal component of the olfactory cilia membrane. Localizes to the antennal tissue with two to three fold higher expression in males compared to females.

Its subcellular location is the cell membrane. Plays an olfactory role that is not restricted to pheromone sensitivity. This Ostrinia nubilalis (European corn borer) protein is Sensory neuron membrane protein 1.